The following is a 202-amino-acid chain: Large ribosomal subunit protein bL25 (202 aa).

The protein belongs to the bacterial ribosomal protein bL25 family. CTC subfamily. Part of the 50S ribosomal subunit; part of the 5S rRNA/L5/L18/L25 subcomplex. Contacts the 5S rRNA. Binds to the 5S rRNA independently of L5 and L18.

In terms of biological role, this is one of the proteins that binds to the 5S RNA in the ribosome where it forms part of the central protuberance. In Chlorobium luteolum (strain DSM 273 / BCRC 81028 / 2530) (Pelodictyon luteolum), this protein is Large ribosomal subunit protein bL25.